The primary structure comprises 240 residues: Ribonuclease PH (240 aa).

Phosphate-binding positions include arginine 87 and glycine 125–arginine 127.

Belongs to the RNase PH family. As to quaternary structure, homohexameric ring arranged as a trimer of dimers.

The catalysed reaction is tRNA(n+1) + phosphate = tRNA(n) + a ribonucleoside 5'-diphosphate. Its function is as follows. Phosphorolytic 3'-5' exoribonuclease that plays an important role in tRNA 3'-end maturation. Removes nucleotide residues following the 3'-CCA terminus of tRNAs; can also add nucleotides to the ends of RNA molecules by using nucleoside diphosphates as substrates, but this may not be physiologically important. Probably plays a role in initiation of 16S rRNA degradation (leading to ribosome degradation) during starvation. The polypeptide is Ribonuclease PH (Stutzerimonas stutzeri (strain A1501) (Pseudomonas stutzeri)).